Consider the following 201-residue polypeptide: Dynactin subunit 6 (201 aa).

It belongs to the dynactin subunits 5/6 family. Dynactin subunit 6 subfamily. Member of the pointed-end complex of the dynactin shoulder complex which contains dctn4, dctn5 and dctn6 subunits and Actr10. Within the complex dctn6 forms a heterodimer with dctn5. Interacts with plk1.

The protein resides in the cytoplasm. It localises to the cytoskeleton. It is found in the chromosome. Its subcellular location is the centromere. The protein localises to the kinetochore. In terms of biological role, part of the dynactin complex that activates the molecular motor dynein for ultra-processive transport along microtubules. The protein is Dynactin subunit 6 (dctn6) of Xenopus tropicalis (Western clawed frog).